A 681-amino-acid chain; its full sequence is Kojibiose hydrolase (681 aa).

The signal sequence occupies residues 1 to 23 (MKKYIFNHVFFFLMLCGSNYLYS). Beta-D-glucose contacts are provided by arginine 74, tryptophan 343, aspartate 344, tryptophan 391, glutamate 392, threonine 407, glutamate 472, tryptophan 473, lysine 538, glutamine 539, and aspartate 573. The active-site Proton donor is the glutamate 472. Residue glutamate 616 is the Proton acceptor of the active site.

The protein belongs to the glycosyl hydrolase 65 family. As to quaternary structure, homohexamer; dimer of trimers.

The protein resides in the periplasm. The catalysed reaction is kojibiose + H2O = beta-D-glucose + D-glucose. Its function is as follows. Glycosidase that specifically hydrolyzes kojibiose to beta-glucose and glucose. Also hydrolyzes, with lower catalytic efficiency, longer kojioligosaccharides (from kojitriose to kojipentaose) and shorter oligosaccharides produced by the degradation of dextran-containing alpha-1,2 branches. Probably acts on alpha-(1-&gt;2)-glucosyl isomaltooligosaccharides. Shows weak activity with nigerose but has no activity toward p-nitrophenyl alpha-glucopyranoside, which is a general substrate of exo-acting alpha-glucoside hydrolases. Has a strict specificity for alpha-1,2-glucosidic linkages. Catalyzes the hydrolytic reaction via an anomer-inverting mechanism. The chain is Kojibiose hydrolase from Flavobacterium johnsoniae (strain ATCC 17061 / DSM 2064 / JCM 8514 / BCRC 14874 / CCUG 350202 / NBRC 14942 / NCIMB 11054 / UW101) (Cytophaga johnsonae).